Consider the following 335-residue polypeptide: Peroxidase 53 (335 aa).

The first 30 residues, 1–30, serve as a signal peptide directing secretion; the sequence is MAVTNLPTCDGLFIISLIVIVSSIFGTSSA. Q31 is subject to Pyrrolidone carboxylic acid. N-linked (GlcNAc...) asparagine glycosylation is found at N33 and N43. Disulfide bonds link C41-C121, C74-C79, C127-C329, and C206-C238. Catalysis depends on H72, which acts as the Proton acceptor. Ca(2+) contacts are provided by D73, V76, G78, D80, and S82. N165 carries N-linked (GlcNAc...) asparagine glycosylation. Residue P169 coordinates substrate. N177 carries an N-linked (GlcNAc...) asparagine glycan. H199 lines the heme b pocket. Residue T200 participates in Ca(2+) binding. N215, N227, and N241 each carry an N-linked (GlcNAc...) asparagine glycan. 3 residues coordinate Ca(2+): D251, T254, and D259. An N-linked (GlcNAc...) asparagine glycan is attached at N297.

This sequence belongs to the peroxidase family. Classical plant (class III) peroxidase subfamily. Requires Ca(2+) as cofactor. The cofactor is heme b. Mainly expressed in roots.

The protein localises to the secreted. It carries out the reaction 2 a phenolic donor + H2O2 = 2 a phenolic radical donor + 2 H2O. Its function is as follows. Removal of H(2)O(2), oxidation of toxic reductants, biosynthesis and degradation of lignin, suberization, auxin catabolism, response to environmental stresses such as wounding, pathogen attack and oxidative stress. These functions might be dependent on each isozyme/isoform in each plant tissue. Functionally, closely linked to lignin formation by showing monolignol substrate specificity. This chain is Peroxidase 53 (PER53), found in Arabidopsis thaliana (Mouse-ear cress).